Reading from the N-terminus, the 350-residue chain is MFEKTTWIKLPRNVLVGHGVLDDLGEAVGELYLTGRPLIVTSPTPNDIAGDRVRAQFDDPATAVVEEASFEAVEKLTETAEAVDPGYLIALGGGKPIDIAKMAADHLGVGFVSVPTVASHDGIVSGRSSIPEGDTRHSVAADPPLAVVADTTLIADAPWRLTTAGCADIISNYTAVKDWRLARRLRNVEYSEYAGALSEMTAELLVENADMIRPGLEESAWVVVKALVSSGVAMSIAGSSRPASGAEHLISHQLDRSAPGRALHGHQVGVASIMTEYLHSGENGEWSAIRDALAALDAPTTAAELGLDDAELIAALTSAHEIRDRYTILQGGINEAAAIEVATATGVIDG.

NAD(+) contacts are provided by residues 94 to 98 (GKPID) and 116 to 119 (TVAS). Position 121 (Asp-121) interacts with substrate. Ser-125 contacts NAD(+). Asp-168 is a substrate binding site. Zn(2+) is bound by residues Asp-168 and His-248. His-252 contacts substrate. His-264 lines the Zn(2+) pocket.

Belongs to the glycerol-1-phosphate dehydrogenase family. Requires Zn(2+) as cofactor.

It localises to the cytoplasm. The catalysed reaction is sn-glycerol 1-phosphate + NAD(+) = dihydroxyacetone phosphate + NADH + H(+). The enzyme catalyses sn-glycerol 1-phosphate + NADP(+) = dihydroxyacetone phosphate + NADPH + H(+). The protein operates within membrane lipid metabolism; glycerophospholipid metabolism. Functionally, catalyzes the NAD(P)H-dependent reduction of dihydroxyacetonephosphate (DHAP or glycerone phosphate) to glycerol 1-phosphate (G1P). The G1P thus generated is used as the glycerophosphate backbone of phospholipids in the cellular membranes of Archaea. The chain is Glycerol-1-phosphate dehydrogenase [NAD(P)+] from Halorubrum lacusprofundi (strain ATCC 49239 / DSM 5036 / JCM 8891 / ACAM 34).